We begin with the raw amino-acid sequence, 634 residues long: Phospholipase B (634 aa).

An N-terminal signal peptide occupies residues 1 to 19 (MSIITTAFALSLLATTAFA). A PLA2c domain is found at 46–569 (DCPSNVTWIR…DTWCWAGDDN (524 aa)). 17 N-linked (GlcNAc...) asparagine glycosylation sites follow: Asn-50, Asn-56, Asn-122, Asn-231, Asn-246, Asn-269, Asn-311, Asn-340, Asn-384, Asn-430, Asn-478, Asn-498, Asn-525, Asn-550, Asn-569, Asn-591, and Asn-603.

Belongs to the lysophospholipase family. In terms of processing, N-glycosylated.

It localises to the secreted. It carries out the reaction a 1-acyl-sn-glycero-3-phosphocholine + H2O = sn-glycerol 3-phosphocholine + a fatty acid + H(+). Functionally, exhibits phospholipase B (PLB), lysophospholipase (LPL) and lysophospholipase/transacylase (LPTA) activities. The protein is Phospholipase B (PLB1) of Cryptococcus neoformans var. neoformans serotype D (strain JEC21 / ATCC MYA-565) (Filobasidiella neoformans).